A 356-amino-acid polypeptide reads, in one-letter code: S-adenosylmethionine:tRNA ribosyltransferase-isomerase (356 aa).

Belongs to the QueA family. As to quaternary structure, monomer.

The protein resides in the cytoplasm. It carries out the reaction 7-aminomethyl-7-carbaguanosine(34) in tRNA + S-adenosyl-L-methionine = epoxyqueuosine(34) in tRNA + adenine + L-methionine + 2 H(+). It participates in tRNA modification; tRNA-queuosine biosynthesis. In terms of biological role, transfers and isomerizes the ribose moiety from AdoMet to the 7-aminomethyl group of 7-deazaguanine (preQ1-tRNA) to give epoxyqueuosine (oQ-tRNA). The sequence is that of S-adenosylmethionine:tRNA ribosyltransferase-isomerase from Yersinia pseudotuberculosis serotype IB (strain PB1/+).